The primary structure comprises 60 residues: Protein AC4 (60 aa).

The protein belongs to the geminiviridae protein AC4/C4 family.

Functionally, pathogenicity determinant. May act as a suppressor of RNA-mediated gene silencing, also known as post-transcriptional gene silencing (PTGS), a mechanism of plant viral defense that limits the accumulation of viral RNAs. This chain is Protein AC4, found in Pepper huasteco yellow vein virus (PHYVV).